Reading from the N-terminus, the 373-residue chain is Diels-Alderase (373 aa).

It belongs to the Diels-Alderase family.

The enzyme catalyses (5S)-3-[(2E,6R,8E,10E,12E)-2,6-dimethyltetradeca-2,8,10,12-tetraenoyl]-5-(hydroxymethyl)pyrrolidine-2,4-dione = trichosetin. It participates in mycotoxin biosynthesis. Hybrid PKS-NRPS synthetase; part of the gene cluster that mediates the biosynthesis of trichosetin, a trans-fused decalin-containing tetramic acid with antimicrobial activity. The PKS module of PKS-NRPS1 together with the enoylreductase (ER) catalyze the formation of the polyketide unit which is then conjugated to L-serine by the condensation domain of the PKS-NRPS1 NRPS module. Activity of the Dieckmann cyclase domain (RED) results in release of the Dieckmann product intermediate. Diels-Alderase (DA) is involved in endo-selective Diels-Alder cycloaddition to form the decalin ring, leading to the production of N-desmethylequisetin also called trichosetin. The cluster does not contain the equisetin N-methyltransferase and consequently, trichosetin is isolated as final product. The chain is Diels-Alderase from Gibberella fujikuroi (strain CBS 195.34 / IMI 58289 / NRRL A-6831) (Bakanae and foot rot disease fungus).